We begin with the raw amino-acid sequence, 312 residues long: MVKHQQTPAYIAAILYSFIIGLSFLFVKIALQTAEPFDILAHRFTIAFAAATVPILFGWVKLSIRVKDVIDILPLALLYPALFFSFQAFGLVYSSSSEAGIIQAAIPIFTMVFAAYVLKERPTWTQKGFTVLSVAGVMFIFVMKGVDVESASLKGSLLILLSALSSAMYNTAARKMTQRFKLTELTYIMSAIGFVVFNAIALVRHGAAGTVGTYFLPFREPGFVLAIVYLGVLSSLVTSFLSNYTLSRIEAFKMSAFNHVSTIVTMIAGFVILNESLAWYHLAGAVCIMIGVVGSNINLEKKTKRPGMPAKK.

10 helical membrane passes run 11–31, 46–66, 72–92, 98–118, 128–148, 155–171, 183–203, 221–241, 254–274, and 277–297; these read IAAILYSFIIGLSFLFVKIAL, IAFAAATVPILFGWVKLSIRV, ILPLALLYPALFFSFQAFGLV, EAGIIQAAIPIFTMVFAAYVL, GFTVLSVAGVMFIFVMKGVDV, GSLLILLSALSSAMYNT, TELTYIMSAIGFVVFNAIALV, PGFVLAIVYLGVLSSLVTSFL, MSAFNHVSTIVTMIAGFVILN, and LAWYHLAGAVCIMIGVVGSNI. EamA domains are found at residues 18-142 and 164-297; these read FIIG…FIFV and LSSA…GSNI.

This sequence belongs to the EamA transporter family.

It is found in the cell membrane. This is an uncharacterized protein from Bacillus subtilis (strain 168).